Reading from the N-terminus, the 288-residue chain is MEGSMALSKWHAYSRLMRIDRPIGSLLLLWPTYWALWIAAQSIPSLHILIVFTAGVFLMRAAGCVINDFADRHFDGHVERTKHRPLPSGDVTEKEAKILFASLVGLSFLLVLTLNSMTIWLSVAGLALAWIYPFVKRVSHLLQVVLGAAFGWSIPMGFSAVSESLPLVCWVLFLVNILWSVIYDTQYAMVDRNDDLKIGVKSTAILFGQYDKLIIGILQIVMIVLLVLVGSLADLGAVYYIALSLSALLFIYQQKLMVDRERAPCFKAFLNNNYVGLILFIGIFLSYL.

A run of 7 helical transmembrane segments spans residues 38-58, 98-120, 141-161, 163-183, 213-233, 238-258, and 268-288; these read IAAQ…GVFL, ILFA…MTIW, LLQV…FSAV, ESLP…SVIY, LIIG…GSLA, VYYI…KLMV, and AFLN…LSYL.

Belongs to the UbiA prenyltransferase family. Mg(2+) is required as a cofactor.

Its subcellular location is the cell inner membrane. The catalysed reaction is all-trans-octaprenyl diphosphate + 4-hydroxybenzoate = 4-hydroxy-3-(all-trans-octaprenyl)benzoate + diphosphate. It participates in cofactor biosynthesis; ubiquinone biosynthesis. Its function is as follows. Catalyzes the prenylation of para-hydroxybenzoate (PHB) with an all-trans polyprenyl group. Mediates the second step in the final reaction sequence of ubiquinone-8 (UQ-8) biosynthesis, which is the condensation of the polyisoprenoid side chain with PHB, generating the first membrane-bound Q intermediate 3-octaprenyl-4-hydroxybenzoate. This is 4-hydroxybenzoate octaprenyltransferase from Providencia stuartii.